A 52-amino-acid polypeptide reads, in one-letter code: Troponin C, skeletal muscle (52 aa).

2 consecutive EF-hand domains span residues 2–37 (KSEE…SGEH) and 38–52 (VTDE…DGDK). Residues D15, N17, D19, Y21, and E26 each contribute to the Ca(2+) site.

This sequence belongs to the troponin C family.

In terms of biological role, troponin is the central regulatory protein of striated muscle contraction. Tn consists of three components: Tn-I which is the inhibitor of actomyosin ATPase, Tn-T which contains the binding site for tropomyosin and Tn-C. The binding of calcium to Tn-C abolishes the inhibitory action of Tn on actin filaments. The polypeptide is Troponin C, skeletal muscle (Protopterus dolloi (Slender lungfish)).